Consider the following 457-residue polypeptide: tRNA modification GTPase MnmE (457 aa).

(6S)-5-formyl-5,6,7,8-tetrahydrofolate is bound by residues Arg-25, Glu-87, and Arg-126. The 155-residue stretch at Gly-223–Phe-377 folds into the TrmE-type G domain. Asn-233 is a K(+) binding site. GTP-binding positions include Asn-233–Ser-238, Thr-252–Thr-258, and Asp-277–Gly-280. A Mg(2+)-binding site is contributed by Ser-237. 3 residues coordinate K(+): Thr-252, Ile-254, and Thr-257. Thr-258 serves as a coordination point for Mg(2+). A (6S)-5-formyl-5,6,7,8-tetrahydrofolate-binding site is contributed by Lys-457.

It belongs to the TRAFAC class TrmE-Era-EngA-EngB-Septin-like GTPase superfamily. TrmE GTPase family. In terms of assembly, homodimer. Heterotetramer of two MnmE and two MnmG subunits. It depends on K(+) as a cofactor.

It localises to the cytoplasm. Its function is as follows. Exhibits a very high intrinsic GTPase hydrolysis rate. Involved in the addition of a carboxymethylaminomethyl (cmnm) group at the wobble position (U34) of certain tRNAs, forming tRNA-cmnm(5)s(2)U34. The polypeptide is tRNA modification GTPase MnmE (Streptococcus pneumoniae serotype 4 (strain ATCC BAA-334 / TIGR4)).